The sequence spans 593 residues: Root phototropism protein 2 (593 aa).

In terms of domain architecture, BTB spans 32-100 (TDVVVEVGEA…CYGVNFEITV (69 aa)). The NPH3 domain maps to 187–469 (NWWTEELCIL…LHALYYDQLK (283 aa)). Position 410 is a phosphotyrosine (tyrosine 410).

The protein belongs to the NPH3 family. Interacts with RPT3 and PHOT1. In terms of tissue distribution, expressed in hypocotyls, guard cells and mesophyll cells.

It participates in protein modification; protein ubiquitination. Functionally, may act as a substrate-specific adapter of an E3 ubiquitin-protein ligase complex (CUL3-RBX1-BTB) which mediates the ubiquitination and subsequent proteasomal degradation of target proteins. Signal transducer of the phototropic response and photo-induced movements. Necessary for root phototropism. Involved in hypocotyl phototropism under high rate but not under low rate light. Regulates stomata opening. Seems to be not involved in chloroplast accumulation and translocation. The polypeptide is Root phototropism protein 2 (RPT2) (Arabidopsis thaliana (Mouse-ear cress)).